Reading from the N-terminus, the 274-residue chain is 2,3,4,5-tetrahydropyridine-2,6-dicarboxylate N-succinyltransferase (274 aa).

The protein belongs to the transferase hexapeptide repeat family.

It is found in the cytoplasm. It catalyses the reaction (S)-2,3,4,5-tetrahydrodipicolinate + succinyl-CoA + H2O = (S)-2-succinylamino-6-oxoheptanedioate + CoA. It functions in the pathway amino-acid biosynthesis; L-lysine biosynthesis via DAP pathway; LL-2,6-diaminopimelate from (S)-tetrahydrodipicolinate (succinylase route): step 1/3. The protein is 2,3,4,5-tetrahydropyridine-2,6-dicarboxylate N-succinyltransferase of Escherichia fergusonii (strain ATCC 35469 / DSM 13698 / CCUG 18766 / IAM 14443 / JCM 21226 / LMG 7866 / NBRC 102419 / NCTC 12128 / CDC 0568-73).